The primary structure comprises 428 residues: tRNA(Ile)-lysidine synthase (428 aa).

Position 28-33 (28-33) interacts with ATP; sequence SGGVDS.

This sequence belongs to the tRNA(Ile)-lysidine synthase family.

It localises to the cytoplasm. It carries out the reaction cytidine(34) in tRNA(Ile2) + L-lysine + ATP = lysidine(34) in tRNA(Ile2) + AMP + diphosphate + H(+). Its function is as follows. Ligates lysine onto the cytidine present at position 34 of the AUA codon-specific tRNA(Ile) that contains the anticodon CAU, in an ATP-dependent manner. Cytidine is converted to lysidine, thus changing the amino acid specificity of the tRNA from methionine to isoleucine. The polypeptide is tRNA(Ile)-lysidine synthase (Streptococcus pyogenes serotype M1).